The sequence spans 293 residues: Protease HtpX homolog (293 aa).

2 helical membrane-spanning segments follow: residues 6-26 and 28-48; these read VAVMLAAMTGLFLAVGYLIGG and SGMVIAFLVAGGMNLFAYWNS. His-130 lines the Zn(2+) pocket. The active site involves Glu-131. Residue His-134 coordinates Zn(2+). 2 helical membrane-spanning segments follow: residues 145-165 and 172-192; these read LTATLAGAISMLANFAFFFGG and PLGAVGMIVMMILAPLAAMMV. A Zn(2+)-binding site is contributed by Glu-201.

Belongs to the peptidase M48B family. Zn(2+) serves as cofactor.

Its subcellular location is the cell inner membrane. This chain is Protease HtpX homolog, found in Rhodospirillum rubrum (strain ATCC 11170 / ATH 1.1.1 / DSM 467 / LMG 4362 / NCIMB 8255 / S1).